The chain runs to 133 residues: ATP synthase epsilon chain, chloroplastic (133 aa).

Belongs to the ATPase epsilon chain family. F-type ATPases have 2 components, CF(1) - the catalytic core - and CF(0) - the membrane proton channel. CF(1) has five subunits: alpha(3), beta(3), gamma(1), delta(1), epsilon(1). CF(0) has three main subunits: a, b and c.

Its subcellular location is the plastid. The protein localises to the chloroplast thylakoid membrane. In terms of biological role, produces ATP from ADP in the presence of a proton gradient across the membrane. This chain is ATP synthase epsilon chain, chloroplastic, found in Piper cenocladum (Ant piper).